Reading from the N-terminus, the 316-residue chain is Ornithine carbamoyltransferase (316 aa).

Residues 57–60, Gln-84, Arg-108, and 135–138 each bind carbamoyl phosphate; these read STRT and HPCQ. L-ornithine contacts are provided by residues Asn-166, Asp-230, and 234 to 235; that span reads SM. Carbamoyl phosphate contacts are provided by residues 269 to 270 and Arg-297; that span reads CL.

Belongs to the aspartate/ornithine carbamoyltransferase superfamily. OTCase family.

The protein resides in the cytoplasm. It catalyses the reaction carbamoyl phosphate + L-ornithine = L-citrulline + phosphate + H(+). Its pathway is amino-acid degradation; L-arginine degradation via ADI pathway; carbamoyl phosphate from L-arginine: step 2/2. Functionally, reversibly catalyzes the transfer of the carbamoyl group from carbamoyl phosphate (CP) to the N(epsilon) atom of ornithine (ORN) to produce L-citrulline. This is Ornithine carbamoyltransferase from Bacillus anthracis (strain CDC 684 / NRRL 3495).